Here is a 63-residue protein sequence, read N- to C-terminus: YLDVKQLANYLLCIGNGQVFNGRKTCQIGCRAVCQQPGCSGYKECEQIPNIRLHKYRCHCNEA.

As to quaternary structure, monomer. Post-translationally, contains four disulfide bonds.

The protein resides in the secreted. Its function is as follows. Has antimicrobial activity against Gram-positive bacteria and fungi. The protein is Megourin-1 of Megoura viciae (Vetch aphid).